A 425-amino-acid chain; its full sequence is Adenylosuccinate synthetase (425 aa).

GTP is bound by residues 12–18 (GDEGKGK) and 40–42 (GHT). Aspartate 13 (proton acceptor) is an active-site residue. Mg(2+) is bound by residues aspartate 13 and glycine 40. Residues 13 to 16 (DEGK), 38 to 41 (NAGH), threonine 130, arginine 144, glutamine 224, threonine 239, and arginine 301 contribute to the IMP site. The active-site Proton donor is histidine 41. 297–303 (TVSNRRR) contacts substrate. GTP-binding positions include arginine 303, 329–331 (KLD), and 411–413 (STS).

Belongs to the adenylosuccinate synthetase family. In terms of assembly, homodimer. The cofactor is Mg(2+).

The protein resides in the cytoplasm. The enzyme catalyses IMP + L-aspartate + GTP = N(6)-(1,2-dicarboxyethyl)-AMP + GDP + phosphate + 2 H(+). It functions in the pathway purine metabolism; AMP biosynthesis via de novo pathway; AMP from IMP: step 1/2. Plays an important role in the de novo pathway of purine nucleotide biosynthesis. Catalyzes the first committed step in the biosynthesis of AMP from IMP. The protein is Adenylosuccinate synthetase of Wolbachia pipientis wMel.